The primary structure comprises 555 residues: Methyl-coenzyme M reductase subunit alpha (555 aa).

Residue Gln-152 coordinates coenzyme F430. Coenzyme B-binding positions include Arg-230, 261–262 (KH), and Arg-275. Coenzyme M contacts are provided by Tyr-337 and Tyr-448.

The protein belongs to the methyl-coenzyme M reductase alpha subunit family. MCR is a hexamer of two alpha, two beta, and two gamma chains, forming a dimer of heterotrimers. Coenzyme F430 serves as cofactor.

Its subcellular location is the cytoplasm. The enzyme catalyses coenzyme B + methyl-coenzyme M = methane + coenzyme M-coenzyme B heterodisulfide. It participates in one-carbon metabolism; methyl-coenzyme M reduction; methane from methyl-coenzyme M: step 1/1. Component of the methyl-coenzyme M reductase (MCR) I that catalyzes the reductive cleavage of methyl-coenzyme M (CoM-S-CH3 or 2-(methylthio)ethanesulfonate) using coenzyme B (CoB or 7-mercaptoheptanoylthreonine phosphate) as reductant which results in the production of methane and the mixed heterodisulfide of CoB and CoM (CoM-S-S-CoB). This is the final step in methanogenesis. The sequence is that of Methyl-coenzyme M reductase subunit alpha (mcrA) from Methanococcus voltae.